Reading from the N-terminus, the 122-residue chain is Large ribosomal subunit protein uL14 (122 aa).

The protein belongs to the universal ribosomal protein uL14 family. Part of the 50S ribosomal subunit. Forms a cluster with proteins L3 and L19. In the 70S ribosome, L14 and L19 interact and together make contacts with the 16S rRNA in bridges B5 and B8.

Functionally, binds to 23S rRNA. Forms part of two intersubunit bridges in the 70S ribosome. The sequence is that of Large ribosomal subunit protein uL14 from Xanthomonas oryzae pv. oryzae (strain MAFF 311018).